Here is a 246-residue protein sequence, read N- to C-terminus: MyoD family inhibitor (246 aa).

Disordered regions lie at residues Met-1–Thr-76 and Gly-91–Thr-151. Positions Ala-14–Ala-26 are enriched in low complexity. The 148-residue stretch at Leu-99 to Ser-246 folds into the MDFI domain.

This sequence belongs to the MDFI family. As to quaternary structure, interacts (via C-terminus) with AXIN1 and LEF1. Interacts with CCNT2. Interacts (via C-terminus) with Piezo channel composed of PIEZO1 or PIEZO2; the interaction prolongs Piezo channel inactivation.

It localises to the nucleus. The protein localises to the cytoplasm. In terms of biological role, inhibits the transactivation activity of the Myod family of myogenic factors and represses myogenesis. Acts by associating with Myod family members and retaining them in the cytoplasm by masking their nuclear localization signals. Can also interfere with the DNA-binding activity of Myod family members. Plays an important role in trophoblast and chondrogenic differentiation. Regulates the transcriptional activity of TCF7L1/TCF3 by interacting directly with TCF7L1/TCF3 and preventing it from binding DNA. Binds to the axin complex, resulting in an increase in the level of free beta-catenin. Affects axin regulation of the WNT and JNK signaling pathways. Regulates the activity of mechanosensitive Piezo channel. The sequence is that of MyoD family inhibitor (MDFI) from Homo sapiens (Human).